A 270-amino-acid polypeptide reads, in one-letter code: Phosphatidylglycerol--prolipoprotein diacylglyceryl transferase (270 aa).

Transmembrane regions (helical) follow at residues 18–38 (ITIY…LWLA), 55–75 (LVLF…VLFE), 90–110 (WQGG…GAVF), and 115–135 (GLSF…GQAI). Arg-137 contacts a 1,2-diacyl-sn-glycero-3-phospho-(1'-sn-glycerol). 3 helical membrane passes run 177–197 (HPTF…LLWL), 205–225 (GELF…IEGM), and 236–256 (LRAA…LWIV).

Belongs to the Lgt family.

Its subcellular location is the cell membrane. The catalysed reaction is L-cysteinyl-[prolipoprotein] + a 1,2-diacyl-sn-glycero-3-phospho-(1'-sn-glycerol) = an S-1,2-diacyl-sn-glyceryl-L-cysteinyl-[prolipoprotein] + sn-glycerol 1-phosphate + H(+). It functions in the pathway protein modification; lipoprotein biosynthesis (diacylglyceryl transfer). In terms of biological role, catalyzes the transfer of the diacylglyceryl group from phosphatidylglycerol to the sulfhydryl group of the N-terminal cysteine of a prolipoprotein, the first step in the formation of mature lipoproteins. This Geobacillus kaustophilus (strain HTA426) protein is Phosphatidylglycerol--prolipoprotein diacylglyceryl transferase.